A 384-amino-acid polypeptide reads, in one-letter code: GTPase Obg (384 aa).

An Obg domain is found at 1–159 (MKFIDEAKIE…RSLQLELKVL (159 aa)). A disordered region spans residues 20-46 (ATSFRREKFVPRGGPDGGDGGKGGSVW). Residues 33–43 (GPDGGDGGKGG) show a composition bias toward gly residues. The region spanning 160-348 (ADVGLLGMPN…LVHQINQYLT (189 aa)) is the OBG-type G domain. GTP is bound by residues 166–173 (GMPNAGKS), 191–195 (FTTLH), 213–216 (DIPG), 284–287 (NKLD), and 329–331 (SAL). Mg(2+)-binding residues include serine 173 and threonine 193.

Belongs to the TRAFAC class OBG-HflX-like GTPase superfamily. OBG GTPase family. Monomer. Requires Mg(2+) as cofactor.

The protein localises to the cytoplasm. An essential GTPase which binds GTP, GDP and possibly (p)ppGpp with moderate affinity, with high nucleotide exchange rates and a fairly low GTP hydrolysis rate. Plays a role in control of the cell cycle, stress response, ribosome biogenesis and in those bacteria that undergo differentiation, in morphogenesis control. The polypeptide is GTPase Obg (Neisseria meningitidis serogroup C / serotype 2a (strain ATCC 700532 / DSM 15464 / FAM18)).